The chain runs to 191 residues: ATP-dependent dethiobiotin synthetase BioD 2 (191 aa).

13–18 (DVGKTI) is a binding site for ATP. T17 lines the Mg(2+) pocket. K38 is a catalytic residue. Residue T42 participates in substrate binding. ATP-binding positions include D50 and 115–118 (EGAG). Residues D50 and E115 each contribute to the Mg(2+) site.

Belongs to the dethiobiotin synthetase family. In terms of assembly, homodimer. The cofactor is Mg(2+).

It is found in the cytoplasm. The enzyme catalyses (7R,8S)-7,8-diammoniononanoate + CO2 + ATP = (4R,5S)-dethiobiotin + ADP + phosphate + 3 H(+). It functions in the pathway cofactor biosynthesis; biotin biosynthesis; biotin from 7,8-diaminononanoate: step 1/2. Catalyzes a mechanistically unusual reaction, the ATP-dependent insertion of CO2 between the N7 and N8 nitrogen atoms of 7,8-diaminopelargonic acid (DAPA, also called 7,8-diammoniononanoate) to form a ureido ring. The sequence is that of ATP-dependent dethiobiotin synthetase BioD 2 from Haemophilus influenzae (strain ATCC 51907 / DSM 11121 / KW20 / Rd).